A 354-amino-acid polypeptide reads, in one-letter code: Hyaluronan and proteoglycan link protein 1 (354 aa).

Positions 1–15 (MKSLLLLVLISFCWA) are excised as a propeptide. Residues N21 and N56 are each glycosylated (N-linked (GlcNAc...) asparagine). An Ig-like V-type domain is found at 38-152 (PRLLVEAEQA…EGLEDDTAVV (115 aa)). 5 disulfide bridges follow: C61-C139, C181-C252, C205-C226, C279-C349, and C304-C325. 2 Link domains span residues 159-254 (VVFP…FCFT) and 259-351 (GRFY…YCFR).

This sequence belongs to the HAPLN family.

It localises to the secreted. The protein resides in the extracellular space. It is found in the extracellular matrix. Its function is as follows. Stabilizes the aggregates of proteoglycan monomers with hyaluronic acid in the extracellular cartilage matrix. The sequence is that of Hyaluronan and proteoglycan link protein 1 (HAPLN1) from Bos taurus (Bovine).